Here is a 193-residue protein sequence, read N- to C-terminus: ATP synthase subunit b (193 aa).

Residues 35–55 traverse the membrane as a helical segment; sequence IPMMLATFIAFVIVFLLLFFF.

It belongs to the ATPase B chain family. F-type ATPases have 2 components, F(1) - the catalytic core - and F(0) - the membrane proton channel. F(1) has five subunits: alpha(3), beta(3), gamma(1), delta(1), epsilon(1). F(0) has three main subunits: a(1), b(2) and c(10-14). The alpha and beta chains form an alternating ring which encloses part of the gamma chain. F(1) is attached to F(0) by a central stalk formed by the gamma and epsilon chains, while a peripheral stalk is formed by the delta and b chains.

The protein localises to the cell membrane. Its function is as follows. F(1)F(0) ATP synthase produces ATP from ADP in the presence of a proton or sodium gradient. F-type ATPases consist of two structural domains, F(1) containing the extramembraneous catalytic core and F(0) containing the membrane proton channel, linked together by a central stalk and a peripheral stalk. During catalysis, ATP synthesis in the catalytic domain of F(1) is coupled via a rotary mechanism of the central stalk subunits to proton translocation. Functionally, component of the F(0) channel, it forms part of the peripheral stalk, linking F(1) to F(0). The sequence is that of ATP synthase subunit b from Mycoplasmopsis synoviae (strain 53) (Mycoplasma synoviae).